Consider the following 78-residue polypeptide: DNA-directed RNA polymerase subunit Rpo5 (78 aa).

The protein belongs to the archaeal Rpo5/eukaryotic RPB5 RNA polymerase subunit family. As to quaternary structure, part of the RNA polymerase complex.

It localises to the cytoplasm. The enzyme catalyses RNA(n) + a ribonucleoside 5'-triphosphate = RNA(n+1) + diphosphate. Functionally, DNA-dependent RNA polymerase (RNAP) catalyzes the transcription of DNA into RNA using the four ribonucleoside triphosphates as substrates. The chain is DNA-directed RNA polymerase subunit Rpo5 from Methanosarcina acetivorans (strain ATCC 35395 / DSM 2834 / JCM 12185 / C2A).